We begin with the raw amino-acid sequence, 137 residues long: Endoribonuclease YbeY (137 aa).

Histidine 105, histidine 109, and aspartate 115 together coordinate Zn(2+).

The protein belongs to the endoribonuclease YbeY family. Zn(2+) serves as cofactor.

The protein resides in the cytoplasm. Functionally, single strand-specific metallo-endoribonuclease involved in late-stage 70S ribosome quality control and in maturation of the 3' terminus of the 16S rRNA. The protein is Endoribonuclease YbeY of Chlorobaculum tepidum (strain ATCC 49652 / DSM 12025 / NBRC 103806 / TLS) (Chlorobium tepidum).